A 339-amino-acid chain; its full sequence is MNKTAEEIVESRRCASEGLTNALTSITVKMSSVLVVTVILLSYYFARLAIRTLWKNNIFSNSTRLILLVCLLNSIIHQTTMLEIRIRQIYRSIVFASEPCRLPFHFTECEVELFVYYLTTYFSTYSVFSLAFDRLISCYTPKYYLSHQYYVSIFLLFIQLIFTLGTYYVGLYGVPPLGYEPFCNYAPKLATNFVKINDFRTLIMGICIIVTVFVYYLSVKSEKQIQQTSYSPGERYIAYENVAASQSVCILIVLQFACILISSLGVNYLRIFKSTLSDEEYNKLAPFFVGVTYANLCLPLVIHCKTKLTIRNRKLRIGVMTSMYGDVGEHINRLKKSWE.

7 helical membrane passes run 26–46, 65–82, 112–132, 151–171, 199–219, 248–268, and 284–304; these read ITVK…YYFA, LILL…TTML, ELFV…SLAF, VSIF…YVGL, FRTL…YLSV, VCIL…GVNY, and LAPF…VIHC.

It belongs to the nematode receptor-like protein sra family.

It is found in the membrane. This is Serpentine receptor class alpha-24 (sra-24) from Caenorhabditis elegans.